A 207-amino-acid chain; its full sequence is Peptidyl-tRNA hydrolase (207 aa).

Y14 provides a ligand contact to tRNA. H19 serves as the catalytic Proton acceptor. TRNA-binding residues include Y64, N66, and N112.

This sequence belongs to the PTH family. Monomer.

Its subcellular location is the cytoplasm. It catalyses the reaction an N-acyl-L-alpha-aminoacyl-tRNA + H2O = an N-acyl-L-amino acid + a tRNA + H(+). Its function is as follows. Hydrolyzes ribosome-free peptidyl-tRNAs (with 1 or more amino acids incorporated), which drop off the ribosome during protein synthesis, or as a result of ribosome stalling. In terms of biological role, catalyzes the release of premature peptidyl moieties from peptidyl-tRNA molecules trapped in stalled 50S ribosomal subunits, and thus maintains levels of free tRNAs and 50S ribosomes. This Rhodopseudomonas palustris (strain HaA2) protein is Peptidyl-tRNA hydrolase.